A 1026-amino-acid chain; its full sequence is Beta-galactosidase (1026 aa).

Positions 104 and 203 each coordinate substrate. D203 lines the Na(+) pocket. Mg(2+) contacts are provided by E418, H420, and E463. Residues E463 and 539–542 each bind substrate; that span reads EYAH. Catalysis depends on E463, which acts as the Proton donor. The active-site Nucleophile is the E539. Mg(2+) is bound at residue N599. Residues F603 and N606 each coordinate Na(+). Residues N606 and W1002 each coordinate substrate.

It belongs to the glycosyl hydrolase 2 family. As to quaternary structure, homotetramer. Mg(2+) serves as cofactor. Requires Na(+) as cofactor.

It catalyses the reaction Hydrolysis of terminal non-reducing beta-D-galactose residues in beta-D-galactosides.. The protein is Beta-galactosidase of Erwinia tasmaniensis (strain DSM 17950 / CFBP 7177 / CIP 109463 / NCPPB 4357 / Et1/99).